A 70-amino-acid polypeptide reads, in one-letter code: DNA gyrase inhibitor YacG (70 aa).

Zn(2+) contacts are provided by cysteine 20, cysteine 23, cysteine 35, and cysteine 39.

It belongs to the DNA gyrase inhibitor YacG family. In terms of assembly, interacts with GyrB. The cofactor is Zn(2+).

In terms of biological role, inhibits all the catalytic activities of DNA gyrase by preventing its interaction with DNA. Acts by binding directly to the C-terminal domain of GyrB, which probably disrupts DNA binding by the gyrase. The protein is DNA gyrase inhibitor YacG of Rhizobium etli (strain ATCC 51251 / DSM 11541 / JCM 21823 / NBRC 15573 / CFN 42).